The following is a 228-amino-acid chain: Rab-like protein 2B (228 aa).

GTP contacts are provided by residues 28-35 (GDSAVGKS), 76-80 (DTAGQ), and 133-136 (NKID). The disordered stretch occupies residues 200 to 228 (LEQEEEDVPDQEQSSSIETPSEEAASPHS).

This sequence belongs to the small GTPase superfamily. Rab family. In terms of assembly, interacts (in its GTP-bound form) with CEP19 (via residues 121-150); this interaction is required for its localization to the mother centriole and cilium basal body. Interacts (in its GTP-bound form) with the intraflagellar transport (IFT) complex B (via the IFT74-IFT81 heterodimer). Binding to CEP19 and the IFT74-IFT81 heterodimer is mutually exclusive. In terms of tissue distribution, expressed in the testis.

Its subcellular location is the cytoplasm. The protein localises to the cytoskeleton. It is found in the microtubule organizing center. It localises to the centrosome. The protein resides in the centriole. Its subcellular location is the cilium basal body. Functionally, small GTPase required for ciliation. Activated in a guanine nucleotide exchange factor (GEF)-independent manner via its intrinsic GDP for GTP nucleotide exchange ability. Involved in ciliary assembly by binding the intraflagellar transport (IFT) complex B from the large pool pre-docked at the base of the cilium and thus triggers its entry into the cilia. The chain is Rab-like protein 2B (RABL2B) from Homo sapiens (Human).